The chain runs to 210 residues: Cytochrome c oxidase subunit 2 (210 aa).

Topologically, residues 1 to 20 are mitochondrial intermembrane; it reads MAFILSFWMIFLLDSVIVLL. A helical membrane pass occupies residues 21-42; sequence SFVCFVCVWICALLFSTVLLVS. The Mitochondrial matrix segment spans residues 43-60; that stretch reads KLNNIYCTWDFTASKFID. The chain crosses the membrane as a helical span at residues 61–86; the sequence is VYWFTIGGMFSLGLLLRLCLLLYFGH. The Mitochondrial intermembrane segment spans residues 87 to 210; that stretch reads LNFVSFDLCK…GFMPIVICFI (124 aa). Histidine 157, cysteine 192, glutamate 194, cysteine 196, histidine 200, and methionine 203 together coordinate Cu cation. A Mg(2+)-binding site is contributed by glutamate 194.

Belongs to the cytochrome c oxidase subunit 2 family. In terms of assembly, component of the cytochrome c oxidase (complex IV, CIV), a multisubunit enzyme composed of a catalytic core of 3 subunits and several supernumerary subunits. The complex exists as a monomer or a dimer and forms supercomplexes (SCs) in the inner mitochondrial membrane with ubiquinol-cytochrome c oxidoreductase (cytochrome b-c1 complex, complex III, CIII). The cofactor is Cu cation.

The protein localises to the mitochondrion inner membrane. It catalyses the reaction 4 Fe(II)-[cytochrome c] + O2 + 8 H(+)(in) = 4 Fe(III)-[cytochrome c] + 2 H2O + 4 H(+)(out). In terms of biological role, component of the cytochrome c oxidase, the last enzyme in the mitochondrial electron transport chain which drives oxidative phosphorylation. The respiratory chain contains 3 multisubunit complexes succinate dehydrogenase (complex II, CII), ubiquinol-cytochrome c oxidoreductase (cytochrome b-c1 complex, complex III, CIII) and cytochrome c oxidase (complex IV, CIV), that cooperate to transfer electrons derived from NADH and succinate to molecular oxygen, creating an electrochemical gradient over the inner membrane that drives transmembrane transport and the ATP synthase. Cytochrome c oxidase is the component of the respiratory chain that catalyzes the reduction of oxygen to water. Electrons originating from reduced cytochrome c in the intermembrane space (IMS) are transferred via the dinuclear copper A center (CU(A)) of subunit 2 and heme A of subunit 1 to the active site in subunit 1, a binuclear center (BNC) formed by heme A3 and copper B (CU(B)). The BNC reduces molecular oxygen to 2 water molecules using 4 electrons from cytochrome c in the IMS and 4 protons from the mitochondrial matrix. This chain is Cytochrome c oxidase subunit 2, found in Leishmania tarentolae (Sauroleishmania tarentolae).